We begin with the raw amino-acid sequence, 271 residues long: S-adenosylmethionine decarboxylase proenzyme (271 aa).

Ser121 (schiff-base intermediate with substrate; via pyruvic acid) is an active-site residue. Ser121 carries the post-translational modification Pyruvic acid (Ser); by autocatalysis. The active-site Proton acceptor; for processing activity is His126. Cys149 serves as the catalytic Proton donor; for catalytic activity.

It belongs to the prokaryotic AdoMetDC family. Type 2 subfamily. In terms of assembly, heterooctamer of four alpha and four beta chains arranged as a tetramer of alpha/beta heterodimers. The cofactor is pyruvate. Post-translationally, is synthesized initially as an inactive proenzyme. Formation of the active enzyme involves a self-maturation process in which the active site pyruvoyl group is generated from an internal serine residue via an autocatalytic post-translational modification. Two non-identical subunits are generated from the proenzyme in this reaction, and the pyruvate is formed at the N-terminus of the alpha chain, which is derived from the carboxyl end of the proenzyme. The post-translation cleavage follows an unusual pathway, termed non-hydrolytic serinolysis, in which the side chain hydroxyl group of the serine supplies its oxygen atom to form the C-terminus of the beta chain, while the remainder of the serine residue undergoes an oxidative deamination to produce ammonia and the pyruvoyl group blocking the N-terminus of the alpha chain.

It catalyses the reaction S-adenosyl-L-methionine + H(+) = S-adenosyl 3-(methylsulfanyl)propylamine + CO2. It participates in amine and polyamine biosynthesis; S-adenosylmethioninamine biosynthesis; S-adenosylmethioninamine from S-adenosyl-L-methionine: step 1/1. Catalyzes the decarboxylation of S-adenosylmethionine to S-adenosylmethioninamine (dcAdoMet), the propylamine donor required for the synthesis of the polyamines spermine and spermidine from the diamine putrescine. This Clostridium perfringens (strain ATCC 13124 / DSM 756 / JCM 1290 / NCIMB 6125 / NCTC 8237 / Type A) protein is S-adenosylmethionine decarboxylase proenzyme.